A 360-amino-acid chain; its full sequence is MEEIFDKLQAVADRYDELNELISDPEVIADSQRFMKLSKEEGSLRETVEKYNQYKKVTQTISDDEELLRETNDDDLTALTKEELAEAREEQAQLEKELEVLLIPKDPNDDKNIIMEIRGAAGGDEASLFAADLYNMYLRYAEKQGWKVEVVDRNETEVGGFKEIALMITGDKVYSKLKFENGAHRVQRVPVTESAGRVHTSTATVGVMPEAEDVDVDIDPKDIRVDVYRSSGAGGQHVNKTSSAVRMTHLPTGIVVAMQDERSQQQNRAKAMRILKSRVYDYYQQQEQSAYDQKRKDAIGTGDRSERIRTYNYPQNRVTDHRIGLTLNKLDKIMAGDLDEIIEALIVADQTQKLEQLRNE.

Q236 carries the N5-methylglutamine modification.

This sequence belongs to the prokaryotic/mitochondrial release factor family. Post-translationally, methylated by PrmC. Methylation increases the termination efficiency of RF1.

The protein localises to the cytoplasm. Functionally, peptide chain release factor 1 directs the termination of translation in response to the peptide chain termination codons UAG and UAA. The polypeptide is Peptide chain release factor 1 (Limosilactobacillus reuteri subsp. reuteri (strain JCM 1112) (Lactobacillus reuteri)).